The primary structure comprises 1072 residues: Integrin alpha-6 (1072 aa).

Positions 1 to 18 (MAAALLLYLPLLPGLAGA) are cleaved as a signal peptide. The Extracellular segment spans residues 19-1010 (FNLDAENVIG…FPAKPVALYT (992 aa)). FG-GAP repeat units follow at residues 23–88 (AENV…DTRC), 94–160 (DEDT…IKDD), 170–223 (DGRL…FYDL), 238–295 (RQDK…QRAL), 296–357 (SLEH…KWEG), 358–413 (IKPI…GINT), and 414–476 (EPAQ…VQPD). N-linked (GlcNAc...) asparagine glycosylation is present at N71. 3 disulfide bridges follow: C79-C88, C125-C148, and C169-C182. Residues N217 and N278 are each glycosylated (N-linked (GlcNAc...) asparagine). Positions 318, 320, 322, and 326 each coordinate Ca(2+). N364 carries N-linked (GlcNAc...) asparagine glycosylation. Positions 380, 382, 384, 386, 388, 438, 440, 442, 444, and 446 each coordinate Ca(2+). Residues C498 and C557 are joined by a disulfide bond. N515 and N609 each carry an N-linked (GlcNAc...) asparagine glycan. Intrachain disulfides connect C625–C631 and C725–C736. N730, N747, and N780 each carry an N-linked (GlcNAc...) asparagine glycan. Disulfide bonds link C880–C927 and C933–C938. Residue N957 is glycosylated (N-linked (GlcNAc...) asparagine). A helical transmembrane segment spans residues 1011-1036 (GVPWWIIAVAIFAGVLMLALLVFLLW). Over 1037 to 1072 (KCGFFKRSKKDHYDATYHKAEIHAQPSDKERLTSDA) the chain is Cytoplasmic. C1038 is lipidated: S-palmitoyl cysteine; by DHHC3. The GFFKR motif signature appears at 1039 to 1043 (GFFKR). Phosphoserine; by CaMK2 is present on S1070.

It belongs to the integrin alpha chain family. As to quaternary structure, heterodimer of an alpha and a beta subunit. The alpha subunit is composed of a heavy and a light chain linked by a disulfide bond. Alpha-6 associates with either beta-1 (ITGB1) or beta-4 (ITGB4) to form ITGA6:ITGB1 and ITGA6:ITGB4, respectively. Post-translationally, phosphorylated in vivo.

The protein resides in the cell membrane. In terms of biological role, integrin alpha-6/beta-1 (ITGA6:ITGB1) is a receptor for laminin on platelets. Integrin alpha-6/beta-1 (ITGA6:ITGB1) is present in oocytes and is involved in sperm-egg fusion. Integrin alpha-6/beta-4 (ITGA6:ITGB4) is a receptor for laminin in epithelial cells and it plays a critical structural role in the hemidesmosome. This chain is Integrin alpha-6 (ITGA6), found in Gallus gallus (Chicken).